The following is a 150-amino-acid chain: MSKIAIFPGSFDPFTKGHEDIVRRSLPLFDKVIIAIGNNAQKNRYFEIDYIIPKIESCFEKTDNVEVKVFKGLTAEFAKESGAQFLIRGLRNTTDFEYENSISQANKYLWKDLETVFMITSPHLAYISSSLIRDIHKYDGDVSGFLPYKI.

A substrate-binding site is contributed by Ser-10. ATP is bound by residues 10 to 11 and His-18; that span reads SF. Residues Lys-42, Thr-74, and Arg-88 each contribute to the substrate site. Residues 89–91, Glu-99, and 124–130 contribute to the ATP site; these read GLR and LAYISSS.

This sequence belongs to the bacterial CoaD family. In terms of assembly, homohexamer. Mg(2+) is required as a cofactor.

The protein resides in the cytoplasm. It carries out the reaction (R)-4'-phosphopantetheine + ATP + H(+) = 3'-dephospho-CoA + diphosphate. It participates in cofactor biosynthesis; coenzyme A biosynthesis; CoA from (R)-pantothenate: step 4/5. Reversibly transfers an adenylyl group from ATP to 4'-phosphopantetheine, yielding dephospho-CoA (dPCoA) and pyrophosphate. The polypeptide is Phosphopantetheine adenylyltransferase (Cytophaga hutchinsonii (strain ATCC 33406 / DSM 1761 / CIP 103989 / NBRC 15051 / NCIMB 9469 / D465)).